The primary structure comprises 277 residues: MSPSAIHNITSDLPSSQQHRPFAGKVALITGSGRGIGRGIALELGKRGASCIINYAKSAGAANEVVAELAKLGSKSIALQADISKPADVAALFEKALKHYGHIDFAISNSGMEVWCEETEVTPELFDQVFNLNTRGQFFVAQNALKHCSEGGRIILTSSIAAQMTGIPNHALYAGSKAAVEGFARSFAVDCGRKRITCNALAPGGIQTDMFDENSWHYVPGGYQGMNIDTIKDGLAKMCPLNRVGTPADIGKIVCMLVSDEGEWINGQVLRCSGGGV.

NADP(+) is bound by residues I36, D82, and N109. Active-site proton donor residues include S158, S159, and Y173. Y173, K177, I206, and T208 together coordinate NADP(+). K177 serves as the catalytic Lowers pKa of active site Tyr.

The protein belongs to the short-chain dehydrogenases/reductases (SDR) family.

It catalyses the reaction scytalone + NADP(+) = naphthalene-1,3,6,8-tetrol + NADPH + H(+). Its pathway is pigment biosynthesis; melanin biosynthesis. Functionally, tetrahydroxynaphthalene reductase; part of the gene cluster that mediates the biosynthesis of dihydroxynaphthalene (DHN)-melanin, a bluish-green pigment forming a dark layer in the conidial wall that protects the conidia from UV radiations. The first step of the pathway is the production of the pentaketide 1,3,6,8-tetrahydroxynaphthalene (1,3,6,8-THN or T4HN) by the polyketide synthase PfmaE though condensation of acetyl-CoA with malonyl-CoA. T4HN is not stable and easily oxidizes into the stable form flaviolin. T4HN is also substrate of the hydroxynaphthalene reductase PfmaG to yield scytalone. The scytalone dehydratase PfmaJ then reduces scytalone to 1,3,8-THN. 1,3,8-THN is then substrate of the hydroxynaphthalene reductase PfmaI to yield vermelone. Vermelone is further converted by the multicopper oxidase PfmaD to 1,8-DHN. Finally the laccase PFICI_06862 transforms 1,8-DHN to DHN-melanin. The roles of the 5-oxoprolinase PfmaA and the proline iminopeptidase PfmaB within the cluster have not been elucidated yet. The protein is Tetrahydroxynaphthalene reductase PfmaG of Pestalotiopsis fici (strain W106-1 / CGMCC3.15140).